The sequence spans 418 residues: Probable serine hydroxymethyltransferase (418 aa).

Residues Leu118 and 122–124 (GHL) each bind (6S)-5,6,7,8-tetrahydrofolate. Position 226 is an N6-(pyridoxal phosphate)lysine (Lys226). 351–353 (SPF) lines the (6S)-5,6,7,8-tetrahydrofolate pocket.

Belongs to the SHMT family. In terms of assembly, homodimer. It depends on pyridoxal 5'-phosphate as a cofactor.

It localises to the cytoplasm. It carries out the reaction (6R)-5,10-methylene-5,6,7,8-tetrahydrofolate + glycine + H2O = (6S)-5,6,7,8-tetrahydrofolate + L-serine. It functions in the pathway one-carbon metabolism; tetrahydrofolate interconversion. Functionally, catalyzes the reversible interconversion of serine and glycine with tetrahydrofolate (THF) serving as the one-carbon carrier. This reaction serves as the major source of one-carbon groups required for the biosynthesis of purines, thymidylate, methionine, and other important biomolecules. This chain is Probable serine hydroxymethyltransferase, found in Mesomycoplasma hyopneumoniae (strain 7448) (Mycoplasma hyopneumoniae).